Here is a 202-residue protein sequence, read N- to C-terminus: ADP-ribosylation factor-like protein 15 (202 aa).

GTP contacts are provided by residues 39–46 (GLTGSGKT), 82–86 (ELGGA), and 142–145 (NHQD).

Belongs to the small GTPase superfamily. Arf family.

In Bos taurus (Bovine), this protein is ADP-ribosylation factor-like protein 15 (ARL15).